The sequence spans 478 residues: Chromosomal replication initiator protein DnaA (478 aa).

Residues 1–95 (MNKTLNPQEV…DVLEKEITEE (95 aa)) form a domain I, interacts with DnaA modulators region. Residues 96 to 141 (INDLVQSMEEEDFALIDHTKPVIPNFFDQNTRVNFGGGPNNHHPTT) are domain II. The segment at 142–358 (GVNPRFTFDN…GALLRIFALA (217 aa)) is domain III, AAA+ region. ATP contacts are provided by Gly-186, Gly-188, Lys-189, and Thr-190. Positions 359-478 (SFNKEEINMT…YKLTQFILRR (120 aa)) are domain IV, binds dsDNA.

It belongs to the DnaA family. As to quaternary structure, oligomerizes as a right-handed, spiral filament on DNA at oriC.

The protein resides in the cytoplasm. In terms of biological role, plays an essential role in the initiation and regulation of chromosomal replication. ATP-DnaA binds to the origin of replication (oriC) to initiate formation of the DNA replication initiation complex once per cell cycle. Binds the DnaA box (a 9 base pair repeat at the origin) and separates the double-stranded (ds)DNA. Forms a right-handed helical filament on oriC DNA; dsDNA binds to the exterior of the filament while single-stranded (ss)DNA is stabiized in the filament's interior. The ATP-DnaA-oriC complex binds and stabilizes one strand of the AT-rich DNA unwinding element (DUE), permitting loading of DNA polymerase. After initiation quickly degrades to an ADP-DnaA complex that is not apt for DNA replication. Binds acidic phospholipids. The sequence is that of Chromosomal replication initiator protein DnaA from Tropheryma whipplei (strain TW08/27) (Whipple's bacillus).